Consider the following 186-residue polypeptide: Adenylate kinase (186 aa).

12-17 (GAGKGT) provides a ligand contact to ATP. Residues 32–61 (STGDLLRAEVNAQSPLGKEAALIMNKGELV) are NMP. AMP is bound by residues threonine 33, arginine 38, 59 to 61 (ELV), 86 to 89 (GFPR), and glutamine 93. Residues 127-133 (SRGRSDD) are LID. Position 128 (arginine 128) interacts with ATP. Residues arginine 130 and arginine 141 each contribute to the AMP site. Residue glycine 169 coordinates ATP.

Belongs to the adenylate kinase family. Monomer.

It is found in the cytoplasm. The catalysed reaction is AMP + ATP = 2 ADP. It participates in purine metabolism; AMP biosynthesis via salvage pathway; AMP from ADP: step 1/1. In terms of biological role, catalyzes the reversible transfer of the terminal phosphate group between ATP and AMP. Plays an important role in cellular energy homeostasis and in adenine nucleotide metabolism. In Prochlorococcus marinus (strain MIT 9211), this protein is Adenylate kinase.